A 380-amino-acid polypeptide reads, in one-letter code: Cytochrome b (380 aa).

The next 4 membrane-spanning stretches (helical) occupy residues 34 to 54 (FGSLLGICLMTQILTGLLLAM), 78 to 99 (WLIRNLHANGASFFFICIYLHI), 114 to 134 (WNTGVILLLTLMATAFVGYVL), and 179 to 199 (FFALHFLLPFMIAGLTLVHLT). The heme b site is built by histidine 84 and histidine 98. Heme b-binding residues include histidine 183 and histidine 197. Residue histidine 202 coordinates a ubiquinone. The next 4 helical transmembrane spans lie at 227 to 247 (LKDILGFTLMLLPLTTLALFS), 289 to 309 (LGGVLALAASVLILFLAPFLH), 321 to 341 (LSQLLFWILVANLFILTWVGS), and 348 to 368 (FIIIGQLASFTYFTILLILFP).

Belongs to the cytochrome b family. In terms of assembly, the cytochrome bc1 complex contains 11 subunits: 3 respiratory subunits (MT-CYB, CYC1 and UQCRFS1), 2 core proteins (UQCRC1 and UQCRC2) and 6 low-molecular weight proteins (UQCRH/QCR6, UQCRB/QCR7, UQCRQ/QCR8, UQCR10/QCR9, UQCR11/QCR10 and a cleavage product of UQCRFS1). This cytochrome bc1 complex then forms a dimer. Heme b serves as cofactor.

It localises to the mitochondrion inner membrane. In terms of biological role, component of the ubiquinol-cytochrome c reductase complex (complex III or cytochrome b-c1 complex) that is part of the mitochondrial respiratory chain. The b-c1 complex mediates electron transfer from ubiquinol to cytochrome c. Contributes to the generation of a proton gradient across the mitochondrial membrane that is then used for ATP synthesis. The polypeptide is Cytochrome b (MT-CYB) (Procellaria parkinsoni (Black petrel)).